A 472-amino-acid polypeptide reads, in one-letter code: Putative cytochrome P450 135B1 (472 aa).

A heme-binding site is contributed by Cys-388. The tract at residues 442–472 (RDVSATSQATAQGAGCPAARGGGPSRAVGSQ) is disordered. The segment covering 452–472 (AQGAGCPAARGGGPSRAVGSQ) has biased composition (low complexity).

Belongs to the cytochrome P450 family. It depends on heme as a cofactor.

This Mycobacterium bovis (strain ATCC BAA-935 / AF2122/97) protein is Putative cytochrome P450 135B1 (cyp135B1).